Here is a 173-residue protein sequence, read N- to C-terminus: Probable F-box protein At1g27490 (173 aa).

The F-box domain maps to 1-46 (MEWSLPVDLQEEILSRVPAKSLARWKSTPKQWKGPISIEFLHLLRS).

The protein is Probable F-box protein At1g27490 of Arabidopsis thaliana (Mouse-ear cress).